Reading from the N-terminus, the 359-residue chain is Membrane-bound lytic murein transglycosylase C (359 aa).

A signal peptide spans 1–16 (MKKYLALALIAPLLIS). C17 carries the N-palmitoyl cysteine lipid modification. C17 carries the S-diacylglycerol cysteine lipid modification.

It belongs to the transglycosylase Slt family.

Its subcellular location is the cell outer membrane. The catalysed reaction is Exolytic cleavage of the (1-&gt;4)-beta-glycosidic linkage between N-acetylmuramic acid (MurNAc) and N-acetylglucosamine (GlcNAc) residues in peptidoglycan, from either the reducing or the non-reducing ends of the peptidoglycan chains, with concomitant formation of a 1,6-anhydrobond in the MurNAc residue.. Functionally, murein-degrading enzyme. May play a role in recycling of muropeptides during cell elongation and/or cell division. The chain is Membrane-bound lytic murein transglycosylase C from Shigella sonnei (strain Ss046).